The following is a 149-amino-acid chain: Calmodulin (149 aa).

A2 is modified (N-acetylalanine). EF-hand domains are found at residues E8–N43, P44–D79, D81–K116, and L117–K149. Residues D21, D23, D25, T27, E32, D57, D59, N61, T63, E68, D94, D96, N98, Y100, E105, D130, D132, D134, Q136, and E141 each coordinate Ca(2+).

Belongs to the calmodulin family.

Calmodulin mediates the control of a large number of enzymes, ion channels and other proteins by Ca(2+). Among the enzymes to be stimulated by the calmodulin-Ca(2+) complex are a number of protein kinases and phosphatases. This chain is Calmodulin (CMD1), found in Blastocladiella emersonii (Aquatic fungus).